The chain runs to 459 residues: MQIQFRLYNTLSRTKEVFNPQDQDNVKMYVCGPTVYYNPHIGNSRSGVVYDLLYRIVIKIFGEKAVKYVRNITDVDDKIIDRAALLGVTIDELTDKVTKEFHKNMAYLGCMLPSIEPKATKHIDVMIAIIERLIAKDHAYIADNHVYFDVLSAPNYTELSNRNLEEMFEGVHVENSKTKKNPQDFVLWKPAKQNESANMNFESPWGLGRPGWHIECSAMSYKYLGENFDIHGGGADLIFPHHTNEIAQSRCAFPSSTYAKYWVHNGFLTVNGEKMSKSLGNFITVRDLMDKQIQGEVVRLFLLSSHYRRPLDYNDKAIEDAKKTLDYWYRAIENINVQKIDLPHDFMQSLLDDMNTPLAVKIINDYAKGVFISKTEEERQLNASAIITCANFIGLMNKSPHEWFNSGVDELYINELVNKRLEAKKHKNWLLADQIRNQLLEEKIILEDQPDGTTIWRKE.

Zn(2+) is bound at residue Cys-31. The 'HIGH' region signature appears at 33-43 (PTVYYNPHIGN). 3 residues coordinate Zn(2+): Cys-216, His-241, and Glu-245. Residues 274–278 (KMSKS) carry the 'KMSKS' region motif. Lys-277 is an ATP binding site.

This sequence belongs to the class-I aminoacyl-tRNA synthetase family. In terms of assembly, monomer. Zn(2+) serves as cofactor.

It localises to the cytoplasm. It catalyses the reaction tRNA(Cys) + L-cysteine + ATP = L-cysteinyl-tRNA(Cys) + AMP + diphosphate. The protein is Cysteine--tRNA ligase of Rickettsia rickettsii (strain Iowa).